The chain runs to 461 residues: Mannose-6-phosphate isomerase (461 aa).

4 residues coordinate Zn(2+): Gln-107, His-109, Glu-134, and His-291. Residue Arg-310 is part of the active site.

It belongs to the mannose-6-phosphate isomerase type 1 family. Zn(2+) serves as cofactor.

It is found in the cytoplasm. The catalysed reaction is D-mannose 6-phosphate = D-fructose 6-phosphate. It participates in nucleotide-sugar biosynthesis; GDP-alpha-D-mannose biosynthesis; alpha-D-mannose 1-phosphate from D-fructose 6-phosphate: step 1/2. Involved in the synthesis of the GDP-mannose and dolichol-phosphate-mannose required for a number of critical mannosyl transfer reactions. This chain is Mannose-6-phosphate isomerase (manA), found in Emericella nidulans (strain FGSC A4 / ATCC 38163 / CBS 112.46 / NRRL 194 / M139) (Aspergillus nidulans).